The chain runs to 376 residues: Alcohol dehydrogenase 1 (376 aa).

Residue serine 2 is modified to N-acetylserine. 7 residues coordinate Zn(2+): cysteine 47, histidine 68, cysteine 98, cysteine 101, cysteine 104, cysteine 112, and cysteine 176. NAD(+)-binding positions include 201-206, aspartate 225, and lysine 230; that span reads GLGGVG. Residue lysine 235 is modified to N6-succinyllysine. 294–296 is an NAD(+) binding site; the sequence is VGV. Lysine 341 bears the N6-succinyllysine mark. Arginine 371 lines the NAD(+) pocket.

Belongs to the zinc-containing alcohol dehydrogenase family. Class-I subfamily. As to quaternary structure, dimer of identical or non-identical chains of three types (A, B, C), which are coded by 3 separate genes at different loci. Zn(2+) serves as cofactor.

The protein resides in the cytoplasm. It carries out the reaction a primary alcohol + NAD(+) = an aldehyde + NADH + H(+). The enzyme catalyses a secondary alcohol + NAD(+) = a ketone + NADH + H(+). The sequence is that of Alcohol dehydrogenase 1 (Adh1) from Rattus norvegicus (Rat).